The primary structure comprises 188 residues: UPF0461 protein C5orf24 homolog (188 aa).

Ser37 carries the phosphoserine modification. Lys75 participates in a covalent cross-link: Glycyl lysine isopeptide (Lys-Gly) (interchain with G-Cter in SUMO2). The span at Lys80 to Arg92 shows a compositional bias: basic residues. A disordered region spans residues Lys80 to Pro141. Residues Ser94 to Gly107 show a composition bias toward polar residues. Phosphoserine is present on residues Ser121 and Ser180. Residue Lys184 forms a Glycyl lysine isopeptide (Lys-Gly) (interchain with G-Cter in SUMO2) linkage.

It belongs to the UPF0461 family.

In Mus musculus (Mouse), this protein is UPF0461 protein C5orf24 homolog.